We begin with the raw amino-acid sequence, 991 residues long: Pro-apoptotic serine protease NMA111 (991 aa).

The tract at residues 1–57 (MTVGKRKLSNGTVNEAKRLDDHVPVVAPSTNPDFENANGEDNEDIDDYSSEGEMSPQ) is disordered. Acidic residues predominate over residues 38 to 50 (NGEDNEDIDDYSS). A serine protease region spans residues 86–269 (HVSNFDTESS…LPVYRPLRAL (184 aa)). Residues histidine 117, aspartate 148, and serine 231 each act as charge relay system in the active site. PDZ domains lie at 296–374 (RRLG…QRNG) and 885–957 (PHHG…VSFD).

The protein belongs to the peptidase S1C family.

Its subcellular location is the nucleus. In terms of biological role, nuclear serine protease which mediates apoptosis. The protein is Pro-apoptotic serine protease NMA111 (NMA111) of Meyerozyma guilliermondii (strain ATCC 6260 / CBS 566 / DSM 6381 / JCM 1539 / NBRC 10279 / NRRL Y-324) (Yeast).